A 400-amino-acid polypeptide reads, in one-letter code: Poly(A) polymerase type 3 (400 aa).

ATP is bound by residues 97-99, Thr106, 110-112, Asp164, Lys225, Tyr234, and 243-244; these read FGS, DID, and GV. 3 residues coordinate Mg(2+): Asp110, Asp112, and Asp164. The short motif at 382 to 390 is the Nuclear localization signal element; sequence GEIINKNKK.

The protein belongs to the poly(A) polymerase family. As to quaternary structure, monomer. The cofactor is Mg(2+). It depends on Mn(2+) as a cofactor.

Its subcellular location is the nucleus. It carries out the reaction RNA(n) + ATP = RNA(n)-3'-adenine ribonucleotide + diphosphate. Polymerase that creates the 3'-poly(A) tail of mRNA's. May acquire specificity through interaction with a cleavage and polyadenylation factor (CPSF). The sequence is that of Poly(A) polymerase type 3 from Xenopus laevis (African clawed frog).